A 147-amino-acid chain; its full sequence is MSSIGAGAGGAVVGAAVAAVAVGGGAPPHVLAVDDSSVDRAVIAGILRSSRFRVTAVDSGKRALELLGSEPNVSMIITDYWMPEMTGYELLKKVKESSKLKKIPVVIMSSENVPTRISRCLEEGAEDFLVKPVRPSDVSRLFSRVLP.

One can recognise a Response regulatory domain in the interval 29 to 146; that stretch reads HVLAVDDSSV…DVSRLFSRVL (118 aa). Residue Asp79 is modified to 4-aspartylphosphate.

The protein belongs to the ARR family. Type-A subfamily. Two-component system major event consists of a His-to-Asp phosphorelay between a sensor histidine kinase (HK) and a response regulator (RR). In plants, the His-to-Asp phosphorelay involves an additional intermediate named Histidine-containing phosphotransfer protein (HPt). This multistep phosphorelay consists of a His-Asp-His-Asp sequential transfer of a phosphate group between first a His and an Asp of the HK protein, followed by the transfer to a conserved His of the HPt protein and finally the transfer to an Asp in the receiver domain of the RR protein.

Functions as a response regulator involved in His-to-Asp phosphorelay signal transduction system. Phosphorylation of the Asp residue in the receiver domain activates the ability of the protein to promote the transcription of target genes. Type-A response regulators seem to act as negative regulators of the cytokinin signaling. The sequence is that of Two-component response regulator ORR11 from Oryza sativa subsp. indica (Rice).